We begin with the raw amino-acid sequence, 60 residues long: Large ribosomal subunit protein bL32 (60 aa).

Positions M1–A21 are disordered.

Belongs to the bacterial ribosomal protein bL32 family.

The sequence is that of Large ribosomal subunit protein bL32 from Chlamydia felis (strain Fe/C-56) (Chlamydophila felis).